The sequence spans 142 residues: Small heat shock protein IbpB (142 aa).

A sHSP domain is found at 25–136; that stretch reads GQEPQGFPPY…QPQRIAIGTT (112 aa).

The protein belongs to the small heat shock protein (HSP20) family. In terms of assembly, homodimer. Forms homomultimers of about 100-150 subunits at optimal growth temperatures. Conformation changes to oligomers at high temperatures or high ionic concentrations. The decrease in size of the multimers is accompanied by an increase in chaperone activity.

It localises to the cytoplasm. Associates with aggregated proteins, together with IbpA, to stabilize and protect them from irreversible denaturation and extensive proteolysis during heat shock and oxidative stress. Aggregated proteins bound to the IbpAB complex are more efficiently refolded and reactivated by the ATP-dependent chaperone systems ClpB and DnaK/DnaJ/GrpE. Its activity is ATP-independent. The protein is Small heat shock protein IbpB of Serratia proteamaculans (strain 568).